Consider the following 407-residue polypeptide: Putative glucose/galactose transporter (407 aa).

The next 12 helical transmembrane spans lie at 11–31 (GSLT…DILI), 47–67 (LIQF…GNVI), 70–90 (IGYP…CALF), 96–116 (FGSY…IVCL), 139–159 (VQAF…LLIF), 180–200 (VQMP…IMYL), 225–245 (FVFG…IGSF), 263–283 (HYLV…SVLM), 300–320 (IVLI…ALTF), 321–341 (VGFF…LNLG), 349–369 (GVIS…GAVT), and 378–398 (NLLY…FFAL).

This sequence belongs to the major facilitator superfamily. FHS transporter (TC 2.A.1.7) family.

Its subcellular location is the cell inner membrane. In terms of biological role, intake of glucose and galactose. This is Putative glucose/galactose transporter (gluP) from Helicobacter pylori (strain ATCC 700392 / 26695) (Campylobacter pylori).